Consider the following 749-residue polypeptide: Disintegrin and metalloproteinase domain-containing protein 10 (749 aa).

Residues M1–G18 form the signal peptide. A propeptide spanning residues L19–R213 is cleaved from the precursor. Residues L19–E673 are Extracellular-facing. A Cysteine switch motif is present at residues G170–V177. Position 172 (C172) interacts with Zn(2+). The Peptidase M12B domain maps to N220 to G457. Intrachain disulfides connect C222–C314, C345–C452, C400–C436, C461–C496, C472–C485, C474–C480, C484–C516, C504–C512, C511–C537, C525–C544, C531–C563, C556–C568, C573–C599, C581–C608, C583–C598, C595–C640, and C633–C646. N268 and N279 each carry an N-linked (GlcNAc...) asparagine glycan. H384 is a Zn(2+) binding site. E385 is a catalytic residue. Zn(2+) is bound by residues H388 and H394. N440 carries N-linked (GlcNAc...) asparagine glycosylation. The Disintegrin domain occupies Q458–N552. An N-linked (GlcNAc...) asparagine glycan is attached at N552. The chain crosses the membrane as a helical span at residues W674–A694. Over G695–H749 the chain is Cytoplasmic. The interval P705–H749 is disordered. Positions P709–P716 match the SH3-binding motif. T720 is subject to Phosphothreonine. The short motif at R723–T729 is the SH3-binding element.

The cofactor is Zn(2+). The precursor is cleaved by furin and PCSK7.

Its subcellular location is the membrane. It carries out the reaction Endopeptidase of broad specificity.. Its function is as follows. Controls the proteolytic processing of Notch and mediates lateral inhibition during neurogenesis. The sequence is that of Disintegrin and metalloproteinase domain-containing protein 10 (adam10) from Xenopus laevis (African clawed frog).